A 454-amino-acid polypeptide reads, in one-letter code: Bifunctional protein GlmU (454 aa).

The pyrophosphorylase stretch occupies residues 1–232 (MTDRTCLSIV…VDNVIGINNR (232 aa)). UDP-N-acetyl-alpha-D-glucosamine is bound by residues 11-14 (LAAG), Lys-25, Gln-78, and 83-84 (GT). Residue Asp-108 coordinates Mg(2+). UDP-N-acetyl-alpha-D-glucosamine-binding residues include Gly-144, Glu-158, Asn-173, and Asn-230. Asn-230 serves as a coordination point for Mg(2+). The linker stretch occupies residues 233–253 (AELAEAETIWQNRKRRELMLS). The segment at 254–454 (GVTLIAPETV…AIKAAKSVSK (201 aa)) is N-acetyltransferase. The UDP-N-acetyl-alpha-D-glucosamine site is built by Arg-319 and Lys-337. Catalysis depends on His-349, which acts as the Proton acceptor. UDP-N-acetyl-alpha-D-glucosamine is bound by residues Tyr-352 and Asn-363. Residues Ala-366, 372-373 (NY), Ser-391, Ser-409, and Arg-426 contribute to the acetyl-CoA site.

In the N-terminal section; belongs to the N-acetylglucosamine-1-phosphate uridyltransferase family. This sequence in the C-terminal section; belongs to the transferase hexapeptide repeat family. In terms of assembly, homotrimer. It depends on Mg(2+) as a cofactor.

It localises to the cytoplasm. It catalyses the reaction alpha-D-glucosamine 1-phosphate + acetyl-CoA = N-acetyl-alpha-D-glucosamine 1-phosphate + CoA + H(+). The catalysed reaction is N-acetyl-alpha-D-glucosamine 1-phosphate + UTP + H(+) = UDP-N-acetyl-alpha-D-glucosamine + diphosphate. It functions in the pathway nucleotide-sugar biosynthesis; UDP-N-acetyl-alpha-D-glucosamine biosynthesis; N-acetyl-alpha-D-glucosamine 1-phosphate from alpha-D-glucosamine 6-phosphate (route II): step 2/2. It participates in nucleotide-sugar biosynthesis; UDP-N-acetyl-alpha-D-glucosamine biosynthesis; UDP-N-acetyl-alpha-D-glucosamine from N-acetyl-alpha-D-glucosamine 1-phosphate: step 1/1. Its pathway is bacterial outer membrane biogenesis; LPS lipid A biosynthesis. Catalyzes the last two sequential reactions in the de novo biosynthetic pathway for UDP-N-acetylglucosamine (UDP-GlcNAc). The C-terminal domain catalyzes the transfer of acetyl group from acetyl coenzyme A to glucosamine-1-phosphate (GlcN-1-P) to produce N-acetylglucosamine-1-phosphate (GlcNAc-1-P), which is converted into UDP-GlcNAc by the transfer of uridine 5-monophosphate (from uridine 5-triphosphate), a reaction catalyzed by the N-terminal domain. This is Bifunctional protein GlmU from Brucella canis (strain ATCC 23365 / NCTC 10854 / RM-666).